The sequence spans 106 residues: Nucleoid-associated protein BRADO0764 (106 aa).

The protein belongs to the YbaB/EbfC family. Homodimer.

It localises to the cytoplasm. It is found in the nucleoid. Binds to DNA and alters its conformation. May be involved in regulation of gene expression, nucleoid organization and DNA protection. In Bradyrhizobium sp. (strain ORS 278), this protein is Nucleoid-associated protein BRADO0764.